Reading from the N-terminus, the 315-residue chain is Hydroxysteroid 11-beta-dehydrogenase 1-like protein (315 aa).

An N-terminal signal peptide occupies residues 1–15 (MKVLLLTGLGALFFA). NADP(+) is bound by residues 36-62 (GANA…TAHT), 87-88 (DM), and 114-116 (NHI). Ser-165 is a binding site for substrate. The Proton acceptor role is filled by Tyr-178. Residues 178-182 (YSAAK) and 211-217 (GLRDRAS) contribute to the NADP(+) site. Residues 221–286 (AVRSSTSRPR…SKTEKNDGHL (66 aa)) are disordered. Residues 277-286 (SKTEKNDGHL) are compositionally biased toward basic and acidic residues.

The protein belongs to the short-chain dehydrogenases/reductases (SDR) family. In terms of tissue distribution, highly expressed in the brain.

Its subcellular location is the secreted. The catalysed reaction is cortisone + NADPH + H(+) = cortisol + NADP(+). Functionally, unidirectional NADP(+)-dependent cortisol dehydrogenase (in vitro). This is Hydroxysteroid 11-beta-dehydrogenase 1-like protein (HSD11B1L) from Homo sapiens (Human).